Consider the following 433-residue polypeptide: MVYEATPFDPITVKPSDKRRVAYFYDADVGNYAYGAGHPMKPHRIRMAHSLIMNYGLYKKMEIYRAKPATKQEMCQFHTDEYIDFLSRVTPDNLEMFKRESVKFNVGDDCPVFDGLYEYCSISGGGSMEGAARLNRGKCDVAVNYAGGLHHAKKSEASGFCYLNDIVLGIIELLRYHPRVLYIDIDVHHGDGVEEAFYTTDRVMTCSFHKYGEFFPGTGELRDIGVGAGKNYAVNVPLRDGIDDATYRSVFEPVIKKIMEWYQPSAVVLQCGGDSLSGDRLGCFNLSMEGHANCVNYVKSFGIPMMVVGGGGYTMRNVARTWCFETGLLNNVVLDKDLPYNEYYEYYGPDYKLSVRPSNMFNVNTPEYLDKVMTNIFANLENTKYAPSVQLNHTPRDAEDLGDVEEDSAEAKDTKGGSQYARDLHVEHDNEFY.

The histone deacetylase stretch occupies residues 19–331 (RRVAYFYDAD…WCFETGLLNN (313 aa)). Residue His-151 is part of the active site. The short motif at 320–340 (RTWCFETGLLNNVVLDKDLPY) is the ESA1-RPD3 motif element. Positions 388–433 (SVQLNHTPRDAEDLGDVEEDSAEAKDTKGGSQYARDLHVEHDNEFY) are disordered. Thr-394 carries the phosphothreonine modification. Residue Ser-408 is modified to Phosphoserine. Over residues 422–433 (RDLHVEHDNEFY) the composition is skewed to basic and acidic residues.

The protein belongs to the histone deacetylase family. HD type 1 subfamily. In terms of assembly, component of the RPD3C(L) complex composed of at least ASH1, CTI6, DEP1, PHO23, RPD3, RXT2, RXT3, SAP30, SDS3, SIN3, UME1 and UME6. Component of the RPD3C(S) complex composed of at least EAF3, RCO1, RPD3, SIN3, and UME1. Interacts with cyclophilins CPR1, CPR6 and CPR7, with the kinase HOG1, and with ESS1, CYC8 and HAC1.

It is found in the cytoplasm. Its subcellular location is the nucleus. It catalyses the reaction N(6)-acetyl-L-lysyl-[histone] + H2O = L-lysyl-[histone] + acetate. In terms of biological role, catalytic component of the RPD3 histone deacetylase (HDAC) complexes RPD3C(L) and RPD3C(S) responsible for the deacetylation of lysine residues on the N-terminal part of the core histones (H2A, H2B, H3 and H4). Histone deacetylation plays an important role in transcriptional regulation, cell cycle progression, DNA damage response, osmotic stress response and developmental events. Is involved in rDNA and telomere silencing and in double strand breaks repair. Required for both full transcription repression and activation of many genes including cell type-specific genes (STE6, TY2 and HO), cell differentiation-specific genes (SPO13), genes that respond to external signals (PHO5) and TRK2. The RPD3 complexes regulate also chromosomal replication timing. The sequence is that of Histone deacetylase RPD3 (RPD3) from Saccharomyces cerevisiae (strain ATCC 204508 / S288c) (Baker's yeast).